The following is a 550-amino-acid chain: Leucine-rich repeat, immunoglobulin-like domain and transmembrane domain-containing protein 2 (550 aa).

The first 19 residues, 1-19, serve as a signal peptide directing secretion; that stretch reads MASVFHYFLLVLVFLDTHA. The region spanning 23 to 54 is the LRRNT domain; that stretch reads FCLPGCTCSEESFGRTLQCTSVSLGKIPGNLS. Residue Asn-52 is glycosylated (N-linked (GlcNAc...) asparagine). 4 LRR repeats span residues 80-103, 104-125, 128-149, and 152-173; these read TLEY…EHLP, ELRE…AFRA, LLRV…ALQF, and SLTY…VFLN. Residues 200 to 252 enclose the LRRCT domain; that stretch reads NPWVCDCRLRGLVQFVKSITLPVILVNSYLICQGPLSKAGQLFHETELSACMK. An Ig-like domain is found at 253-341; the sequence is PQISTPSANI…SIGKSNLVIS (89 aa). Cys-274 and Cys-327 are joined by a disulfide. The region spanning 361–451 is the Fibronectin type-III domain; it reads EGNAYIDLRV…QGQCVAFVTG (91 aa). A helical membrane pass occupies residues 466–486; the sequence is VTVVLCVVLLAVPVGAYAWAA. A disordered region spans residues 508-550; sequence SCTPAAPQSKDGSFREHPAVCDDGEGHIDTEGDKEKGGTEDNS. Residues 519 to 550 are compositionally biased toward basic and acidic residues; that stretch reads GSFREHPAVCDDGEGHIDTEGDKEKGGTEDNS.

As to quaternary structure, interacts with LRIT1; may form a heterodimer with LRIT1.

The protein resides in the membrane. The protein is Leucine-rich repeat, immunoglobulin-like domain and transmembrane domain-containing protein 2 (LRIT2) of Homo sapiens (Human).